A 242-amino-acid chain; its full sequence is MQLFHFHTPEQVPPAGIPACAVAIDVLRATTTIAAALAAGAEAVEVFADLQSLQAASRSWPASKRLLAGERGGKTVTGFDLGNSPREYTPERVRDQRIFMSTTNGTRTLQRLERIPVVITAALVNLGAVVEFLRRGAFAEVWLVGSGWEGAFALEDTACAGAVLHRLGCSWEQLGNDEAVAALALYQTWQDNLLGLLRRSSHGQRLLAISPENDSDLAYCAKLDRLSVVPQQVQPGVLALAG.

The protein belongs to the ComB family. The cofactor is Mg(2+).

It catalyses the reaction (2R)-O-phospho-3-sulfolactate + H2O = (2R)-3-sulfolactate + phosphate. The polypeptide is Probable 2-phosphosulfolactate phosphatase (Synechococcus sp. (strain JA-3-3Ab) (Cyanobacteria bacterium Yellowstone A-Prime)).